A 952-amino-acid polypeptide reads, in one-letter code: Inactive atromentin synthetase invA6 (952 aa).

The tract at residues 58-462 (DSSVQTRSFS…NGRIKDTVIV (405 aa)) is adenylation (A) domain. Positions 594–672 (APSTETEKTL…SLAKYVDSLV (79 aa)) constitute a Carrier domain. Residues 599–669 (TEKTLGRLYA…VISSLAKYVD (71 aa)) are thiolation and peptide carrier (T) domain. O-(pantetheine 4'-phosphoryl)serine is present on S631. Residues 695-939 (PIFMVHPGIG…LMDFDHVSGF (245 aa)) are thioesterase (TE) domain.

Belongs to the ATP-dependent AMP-binding enzyme family.

Inactive atromentin synthetase homolog. Does not accept 4-hydroxyphenylpyruvate (4-HPP) as substrate. Both the adenylation (A) and the thioesterase (TE) domain of the invA6 enzyme are inactive. The sequence is that of Inactive atromentin synthetase invA6 (invA6) from Paxillus involutus (Naked brimcap).